The primary structure comprises 199 residues: Fe/S biogenesis protein NfuA (199 aa).

[4Fe-4S] cluster-binding residues include cysteine 156 and cysteine 159.

The protein belongs to the NfuA family. As to quaternary structure, homodimer. It depends on [4Fe-4S] cluster as a cofactor.

In terms of biological role, involved in iron-sulfur cluster biogenesis. Binds a 4Fe-4S cluster, can transfer this cluster to apoproteins, and thereby intervenes in the maturation of Fe/S proteins. Could also act as a scaffold/chaperone for damaged Fe/S proteins. The protein is Fe/S biogenesis protein NfuA of Actinobacillus pleuropneumoniae serotype 5b (strain L20).